Consider the following 266-residue polypeptide: F-box only protein 50 (266 aa).

Residues 1–16 (MEKTQDRDTLSGRMEA) show a composition bias toward basic and acidic residues. The disordered stretch occupies residues 1–53 (MEKTQDRDTLSGRMEAEGSLNSEELPPHPQSPPPPPSPRSPTSPVTPELPQPN). Residues 27-41 (PHPQSPPPPPSPRSP) are compositionally biased toward pro residues. Phosphoserine is present on residues Ser-31, Ser-37, Ser-40, and Ser-43. The residue at position 46 (Thr-46) is a Phosphothreonine. The region spanning 86–264 (LFLERPLYRN…VTDSSVSVQL (179 aa)) is the FBA domain.

In terms of tissue distribution, strongly expressed in kidney. Weakly expressed in stomach, colon, duodenum and prostate.

Its subcellular location is the cytoplasm. In terms of biological role, promotes cell proliferation. This Mus musculus (Mouse) protein is F-box only protein 50 (Nccrp1).